A 304-amino-acid polypeptide reads, in one-letter code: Oxygen-dependent coproporphyrinogen-III oxidase (304 aa).

Position 93 (S93) interacts with substrate. Residues H97 and H107 each coordinate a divalent metal cation. The active-site Proton donor is H107. 109-111 provides a ligand contact to substrate; the sequence is NVR. H146 and H176 together coordinate a divalent metal cation. The segment at 241–276 is important for dimerization; that stretch reads YVEFNLVYDRGTLFGLQSGGRTESILMSLPPQVRWG. 259–261 contributes to the substrate binding site; the sequence is GGR.

The protein belongs to the aerobic coproporphyrinogen-III oxidase family. Homodimer. A divalent metal cation serves as cofactor.

It localises to the cytoplasm. The enzyme catalyses coproporphyrinogen III + O2 + 2 H(+) = protoporphyrinogen IX + 2 CO2 + 2 H2O. Its pathway is porphyrin-containing compound metabolism; protoporphyrin-IX biosynthesis; protoporphyrinogen-IX from coproporphyrinogen-III (O2 route): step 1/1. Involved in the heme biosynthesis. Catalyzes the aerobic oxidative decarboxylation of propionate groups of rings A and B of coproporphyrinogen-III to yield the vinyl groups in protoporphyrinogen-IX. In Pseudomonas syringae pv. tomato (strain ATCC BAA-871 / DC3000), this protein is Oxygen-dependent coproporphyrinogen-III oxidase.